The chain runs to 41 residues: Large ribosomal subunit protein bL36B (41 aa).

This sequence belongs to the bacterial ribosomal protein bL36 family.

In Haemophilus ducreyi (strain 35000HP / ATCC 700724), this protein is Large ribosomal subunit protein bL36B.